The chain runs to 279 residues: Energy-coupling factor transporter ATP-binding protein EcfA1 (279 aa).

The 235-residue stretch at 6–240 (ISVDHLTYQY…GTQLVEMGLD (235 aa)) folds into the ABC transporter domain. Position 40–47 (40–47 (GHNGSGKS)) interacts with ATP.

This sequence belongs to the ABC transporter superfamily. Energy-coupling factor EcfA family. As to quaternary structure, forms a stable energy-coupling factor (ECF) transporter complex composed of 2 membrane-embedded substrate-binding proteins (S component), 2 ATP-binding proteins (A component) and 2 transmembrane proteins (T component).

It is found in the cell membrane. Its function is as follows. ATP-binding (A) component of a common energy-coupling factor (ECF) ABC-transporter complex. Unlike classic ABC transporters this ECF transporter provides the energy necessary to transport a number of different substrates. This Levilactobacillus brevis (strain ATCC 367 / BCRC 12310 / CIP 105137 / JCM 1170 / LMG 11437 / NCIMB 947 / NCTC 947) (Lactobacillus brevis) protein is Energy-coupling factor transporter ATP-binding protein EcfA1.